We begin with the raw amino-acid sequence, 309 residues long: DNA-directed RNA polymerase subunit alpha (309 aa).

Positions 1-225 (MFQVQCLESA…SLFKLVNSAD (225 aa)) are alpha N-terminal domain (alpha-NTD). Residues 237 to 309 (IVQVSQTDVT…LHERFNLTLN (73 aa)) form an alpha C-terminal domain (alpha-CTD) region.

It belongs to the RNA polymerase alpha chain family. As to quaternary structure, in plastids the minimal PEP RNA polymerase catalytic core is composed of four subunits: alpha, beta, beta', and beta''. When a (nuclear-encoded) sigma factor is associated with the core the holoenzyme is formed, which can initiate transcription.

Its subcellular location is the plastid. It localises to the chloroplast. The catalysed reaction is RNA(n) + a ribonucleoside 5'-triphosphate = RNA(n+1) + diphosphate. In terms of biological role, DNA-dependent RNA polymerase catalyzes the transcription of DNA into RNA using the four ribonucleoside triphosphates as substrates. This chain is DNA-directed RNA polymerase subunit alpha, found in Emiliania huxleyi (Coccolithophore).